Here is a 328-residue protein sequence, read N- to C-terminus: MVKIAIDMMGGDDAPGIVLEAVEKAVNDFKDLEIILFGDQNQYTLNHERIEFRHCSEKIEMEDEPVRAIKRKKDSSMVRMAEAVKNGEADGCVSAGNTGALMSAGLFIVGRIKGVARPALVVTLPTIDGKGFVFLDVGANADAKPEHLLQYAQLGNIYAKKIRGIQNPKVSLLNIGTEPAKGNTLTKKSYQLLKDDQSFNFDGNIEAKTLMEGNTDVVVTDGYTGNMVLKNIEGTAKSIGKMLKETFLGSLKNKLAALVLKKDLDTFTKKMDYAEYGGSVLLGLDGTVVKAHGGSNARAFYSAIRQAKIAGDEKIVDIMRETVGGKDE.

It belongs to the PlsX family. As to quaternary structure, homodimer. Probably interacts with PlsY.

It is found in the cytoplasm. The catalysed reaction is a fatty acyl-[ACP] + phosphate = an acyl phosphate + holo-[ACP]. It functions in the pathway lipid metabolism; phospholipid metabolism. In terms of biological role, catalyzes the reversible formation of acyl-phosphate (acyl-PO(4)) from acyl-[acyl-carrier-protein] (acyl-ACP). This enzyme utilizes acyl-ACP as fatty acyl donor, but not acyl-CoA. This Staphylococcus haemolyticus (strain JCSC1435) protein is Phosphate acyltransferase.